A 591-amino-acid polypeptide reads, in one-letter code: Potassium-transporting ATPase potassium-binding subunit (591 aa).

Helical transmembrane passes span 6 to 26 (WFQI…LGVF), 63 to 83 (WTEY…MLYI), 137 to 157 (GLAY…IAFI), 179 to 199 (VLWV…SQGV), 272 to 292 (LSNL…TYTL), 303 to 323 (WAVW…VYWA), 405 to 425 (AGMY…GLMV), 444 to 464 (AMLV…ISSV), 510 to 530 (VAIG…MLAI), and 553 to 573 (LFSV…FFPA).

This sequence belongs to the KdpA family. In terms of assembly, the system is composed of three essential subunits: KdpA, KdpB and KdpC.

It localises to the cell inner membrane. Part of the high-affinity ATP-driven potassium transport (or Kdp) system, which catalyzes the hydrolysis of ATP coupled with the electrogenic transport of potassium into the cytoplasm. This subunit binds the periplasmic potassium ions and delivers the ions to the membrane domain of KdpB through an intramembrane tunnel. The protein is Potassium-transporting ATPase potassium-binding subunit of Koribacter versatilis (strain Ellin345).